Reading from the N-terminus, the 364-residue chain is tRNA-specific 2-thiouridylase MnmA 2 (364 aa).

ATP contacts are provided by residues 10–17 (GMSGGVDS) and methionine 36. Cysteine 106 acts as the Nucleophile in catalysis. Cysteine 106 and cysteine 204 are oxidised to a cystine. An ATP-binding site is contributed by glycine 130. The segment at 154–156 (KDQ) is interaction with tRNA. Cysteine 204 serves as the catalytic Cysteine persulfide intermediate. Residues 310 to 311 (RY) are interaction with tRNA.

Belongs to the MnmA/TRMU family.

It is found in the cytoplasm. It catalyses the reaction S-sulfanyl-L-cysteinyl-[protein] + uridine(34) in tRNA + AH2 + ATP = 2-thiouridine(34) in tRNA + L-cysteinyl-[protein] + A + AMP + diphosphate + H(+). Functionally, catalyzes the 2-thiolation of uridine at the wobble position (U34) of tRNA, leading to the formation of s(2)U34. This Caldanaerobacter subterraneus subsp. tengcongensis (strain DSM 15242 / JCM 11007 / NBRC 100824 / MB4) (Thermoanaerobacter tengcongensis) protein is tRNA-specific 2-thiouridylase MnmA 2.